The following is a 322-amino-acid chain: MAAAVVQLADLPFIRQFGFSPLVVGIVCGMLYGNFLRGTMPADWGAGVHFTARRLLRIAVAFYGLNISIQQIAAVGLPGLAVSVGVVASTLLIGTVAGQRLLGLDRDTAMLTAAGSAICGAAAVLAFEPTLRAAPHKSAVAVATVVLFGTLSMFLYPVIYHAGWLPFDTQALGIYIGGTVHEVAQVVGAASNIDPATTEVATIVKMTRVALLVPVLLVLGFWLRASAAAGADGKSHAKLPVPWFAIGFLVLAIVNSLDILPSDLVTAIRKLDVFVLTMAMTALGIETRFAQIRKAGPRVMALGLVLYAWLVFGGYGIVKLAT.

10 helical membrane passes run 13 to 35 (FIRQ…YGNF), 50 to 69 (FTAR…NISI), 76 to 98 (GLPG…TVAG), 108 to 127 (TAML…VLAF), 139 to 161 (AVAV…VIYH), 171 to 193 (ALGI…ASNI), 209 to 231 (VALL…AAGA), 241 to 260 (VPWF…LDIL), 273 to 292 (VFVL…FAQI), and 296 to 318 (GPRV…YGIV).

The protein belongs to the UPF0324 family.

It localises to the cell membrane. This Bordetella bronchiseptica (strain ATCC BAA-588 / NCTC 13252 / RB50) (Alcaligenes bronchisepticus) protein is UPF0324 membrane protein BB4178.